The sequence spans 339 residues: Glyceraldehyde-3-phosphate dehydrogenase (339 aa).

NAD(+) is bound by residues Arg-13–Ile-14, Asp-35, and Lys-84. D-glyceraldehyde 3-phosphate is bound by residues Ser-156–Thr-158, Thr-187, Thr-216–Gly-217, and Arg-239. Catalysis depends on Cys-157, which acts as the Nucleophile. Residue Asn-321 coordinates NAD(+).

Belongs to the glyceraldehyde-3-phosphate dehydrogenase family. In terms of assembly, homotetramer.

Its subcellular location is the cytoplasm. The enzyme catalyses D-glyceraldehyde 3-phosphate + phosphate + NAD(+) = (2R)-3-phospho-glyceroyl phosphate + NADH + H(+). Its pathway is carbohydrate degradation; glycolysis; pyruvate from D-glyceraldehyde 3-phosphate: step 1/5. In Onchocerca volvulus, this protein is Glyceraldehyde-3-phosphate dehydrogenase.